Here is a 247-residue protein sequence, read N- to C-terminus: NAD-dependent protein deacetylase (247 aa).

One can recognise a Deacetylase sirtuin-type domain in the interval 1-244; sequence MIYEKVAEEL…PKILENVRQK (244 aa). Residues Ala22, Thr26, Phe33, Arg34, Gln98, Ile100, Asp101, and His116 each coordinate NAD(+). Residue Phe33 participates in nicotinamide binding. Nicotinamide contacts are provided by Ile100 and Asp101. The active-site Proton acceptor is His116. Cys124, Cys127, Cys149, and Cys151 together coordinate Zn(2+). NAD(+)-binding residues include Ser187, Ser188, Asn212, and Val230.

Belongs to the sirtuin family. Class U subfamily. In terms of assembly, monomer. The cofactor is Zn(2+).

Its subcellular location is the cytoplasm. It carries out the reaction N(6)-acetyl-L-lysyl-[protein] + NAD(+) + H2O = 2''-O-acetyl-ADP-D-ribose + nicotinamide + L-lysyl-[protein]. Functionally, NAD-dependent protein deacetylase which modulates the activities of several enzymes which are inactive in their acetylated form. Deacetylates the N-terminal lysine residue of albA1, the major archaeal DNA compaction protein and that, in turn, increases albA1's DNA binding affinity, thereby repressing transcription. In Saccharolobus solfataricus (strain ATCC 35092 / DSM 1617 / JCM 11322 / P2) (Sulfolobus solfataricus), this protein is NAD-dependent protein deacetylase.